The primary structure comprises 180 residues: Acireductone dioxygenase (180 aa).

4 residues coordinate Fe(2+): histidine 99, histidine 101, glutamate 105, and histidine 145. The Ni(2+) site is built by histidine 99, histidine 101, glutamate 105, and histidine 145.

This sequence belongs to the acireductone dioxygenase (ARD) family. Monomer. Requires Fe(2+) as cofactor. The cofactor is Ni(2+).

The catalysed reaction is 1,2-dihydroxy-5-(methylsulfanyl)pent-1-en-3-one + O2 = 3-(methylsulfanyl)propanoate + CO + formate + 2 H(+). It catalyses the reaction 1,2-dihydroxy-5-(methylsulfanyl)pent-1-en-3-one + O2 = 4-methylsulfanyl-2-oxobutanoate + formate + 2 H(+). Its pathway is amino-acid biosynthesis; L-methionine biosynthesis via salvage pathway; L-methionine from S-methyl-5-thio-alpha-D-ribose 1-phosphate: step 5/6. Catalyzes 2 different reactions between oxygen and the acireductone 1,2-dihydroxy-3-keto-5-methylthiopentene (DHK-MTPene) depending upon the metal bound in the active site. Fe-containing acireductone dioxygenase (Fe-ARD) produces formate and 2-keto-4-methylthiobutyrate (KMTB), the alpha-ketoacid precursor of methionine in the methionine recycle pathway. Ni-containing acireductone dioxygenase (Ni-ARD) produces methylthiopropionate, carbon monoxide and formate, and does not lie on the methionine recycle pathway. The polypeptide is Acireductone dioxygenase (Geobacillus kaustophilus (strain HTA426)).